Consider the following 20-residue polypeptide: Peroxidase 1 (20 aa).

Residue His-14 participates in heme binding. Thr-15 lines the Ca(2+) pocket.

This sequence belongs to the peroxidase family. Classical plant (class III) peroxidase subfamily. Ca(2+) serves as cofactor. The cofactor is heme b.

Its subcellular location is the secreted. It carries out the reaction 2 a phenolic donor + H2O2 = 2 a phenolic radical donor + 2 H2O. In terms of biological role, removal of H(2)O(2), oxidation of toxic reductants, biosynthesis and degradation of lignin, suberization, auxin catabolism, response to environmental stresses such as wounding, pathogen attack and oxidative stress. These functions might be dependent on each isozyme/isoform in each plant tissue. In Betula pendula (European white birch), this protein is Peroxidase 1.